The sequence spans 122 residues: Large ribosomal subunit protein uL14 (122 aa).

It belongs to the universal ribosomal protein uL14 family. In terms of assembly, part of the 50S ribosomal subunit. Forms a cluster with proteins L3 and L19. In the 70S ribosome, L14 and L19 interact and together make contacts with the 16S rRNA in bridges B5 and B8.

In terms of biological role, binds to 23S rRNA. Forms part of two intersubunit bridges in the 70S ribosome. The chain is Large ribosomal subunit protein uL14 from Beijerinckia indica subsp. indica (strain ATCC 9039 / DSM 1715 / NCIMB 8712).